Reading from the N-terminus, the 443-residue chain is Zinc finger protein 713 (443 aa).

A compositionally biased stretch (polar residues) spans 1 to 10 (MPSQNAVFSQ). Disordered stretches follow at residues 1–23 (MPSQ…NDGS) and 99–118 (DTHP…TSQN). In terms of domain architecture, KRAB spans 32 to 102 (LTFQDVAVDF…ERDSLLDTHP (71 aa)). The segment covering 99–112 (DTHPDGENRPEIKK) has biased composition (basic and acidic residues). The C2H2-type 1; degenerate zinc finger occupies 255-280 (HTAEKPSECGKAFSHTSSLSQPQMLL). C2H2-type zinc fingers lie at residues 286–308 (YKCD…QRIH), 314–336 (FICN…LRIH), 342–364 (YKCN…HRLH), 370–392 (YECG…ERTH), and 398–420 (YKCN…RKIH).

This sequence belongs to the krueppel C2H2-type zinc-finger protein family. Expressed in fetal and adult brain.

Its subcellular location is the nucleus. May be involved in transcriptional regulation. This chain is Zinc finger protein 713, found in Homo sapiens (Human).